The following is a 1913-amino-acid chain: Protein TIC 214 (1913 aa).

5 helical membrane-spanning segments follow: residues 18-38, 64-84, 124-144, 172-192, and 214-234; these read IINS…FSIG, FITG…HLAL, LSIQ…HLML, VGWL…VSWI, and LKSA…VNYL. Disordered stretches follow at residues 245-330, 707-734, and 1605-1652; these read KLNE…ETEE, YTDK…NSDT, and EKED…RKKK. Basic and acidic residues predominate over residues 260 to 289; it reads KESQKSKESEEERDVEKETTSETKETKQEQ. Positions 303–314 are enriched in acidic residues; sequence EKEDPDKIDETE. Residues 315–330 show a composition bias toward basic and acidic residues; the sequence is EIRVNGKEKKKDETEE. The span at 718–729 shows a compositional bias: low complexity; sequence PNPNTDNTTTEN.

It belongs to the TIC214 family. In terms of assembly, part of the Tic complex.

Its subcellular location is the plastid. It is found in the chloroplast inner membrane. Involved in protein precursor import into chloroplasts. May be part of an intermediate translocation complex acting as a protein-conducting channel at the inner envelope. This chain is Protein TIC 214, found in Acorus calamus var. americanus (American sweet flag).